The following is a 274-amino-acid chain: 2,3,4,5-tetrahydropyridine-2,6-dicarboxylate N-succinyltransferase (274 aa).

Residues Arg104 and Asp141 each contribute to the substrate site.

It belongs to the transferase hexapeptide repeat family. In terms of assembly, homotrimer.

The protein localises to the cytoplasm. The enzyme catalyses (S)-2,3,4,5-tetrahydrodipicolinate + succinyl-CoA + H2O = (S)-2-succinylamino-6-oxoheptanedioate + CoA. It participates in amino-acid biosynthesis; L-lysine biosynthesis via DAP pathway; LL-2,6-diaminopimelate from (S)-tetrahydrodipicolinate (succinylase route): step 1/3. This Yersinia enterocolitica serotype O:8 / biotype 1B (strain NCTC 13174 / 8081) protein is 2,3,4,5-tetrahydropyridine-2,6-dicarboxylate N-succinyltransferase.